The chain runs to 151 residues: Transcription antitermination protein NusB (151 aa).

This sequence belongs to the NusB family.

Involved in transcription antitermination. Required for transcription of ribosomal RNA (rRNA) genes. Binds specifically to the boxA antiterminator sequence of the ribosomal RNA (rrn) operons. This is Transcription antitermination protein NusB from Photobacterium profundum (strain SS9).